The sequence spans 1484 residues: Chromosome partition protein MukB (1484 aa).

Residue 34 to 41 coordinates ATP; it reads GGNGAGKS. 3 coiled-coil regions span residues 326–418, 444–472, and 509–602; these read LEAD…QYNQ, LDTF…QTAH, and RHLA…QRAP. Residues 666-783 are flexible hinge; the sequence is PGGAEDQRLN…SLPIFGRAAR (118 aa). Coiled-coil stretches lie at residues 835-923, 977-1116, and 1209-1265; these read EAEI…AKLE, EMLS…AKAG, and VEAI…LQSV. Residues 1049-1074 form a disordered region; it reads ADSGAEERARQRRDELHAQLSNNRSR. Residues 1051–1065 show a composition bias toward basic and acidic residues; that stretch reads SGAEERARQRRDELH.

The protein belongs to the SMC family. MukB subfamily. Homodimerization via its hinge domain. Binds to DNA via its C-terminal region. Interacts, and probably forms a ternary complex, with MukE and MukF via its C-terminal region. The complex formation is stimulated by calcium or magnesium. Interacts with tubulin-related protein FtsZ.

It is found in the cytoplasm. The protein localises to the nucleoid. Functionally, plays a central role in chromosome condensation, segregation and cell cycle progression. Functions as a homodimer, which is essential for chromosome partition. Involved in negative DNA supercoiling in vivo, and by this means organize and compact chromosomes. May achieve or facilitate chromosome segregation by condensation DNA from both sides of a centrally located replisome during cell division. The polypeptide is Chromosome partition protein MukB (Salmonella dublin (strain CT_02021853)).